The sequence spans 199 residues: Recombination protein RecR (199 aa).

Residues 58–73 (CKTCGNIDTQSPCTVC) form a C4-type zinc finger. Residues 81 to 176 (AMIVVVADVA…KVTRLAHGVP (96 aa)) form the Toprim domain.

It belongs to the RecR family.

Functionally, may play a role in DNA repair. It seems to be involved in an RecBC-independent recombinational process of DNA repair. It may act with RecF and RecO. The sequence is that of Recombination protein RecR from Bradyrhizobium sp. (strain BTAi1 / ATCC BAA-1182).